The following is a 197-amino-acid chain: Holliday junction branch migration complex subunit RuvA (197 aa).

Residues 1–64 are domain I; sequence MYEYIKGTYM…EDFIGLYGFG (64 aa). Residues 65–143 form a domain II region; it reads SKEELELFNK…VNLDEGIQTD (79 aa). The tract at residues 144–149 is flexible linker; the sequence is SNDIKV. A domain III region spans residues 149–197; the sequence is VSSKILEEAKEALMSLGYSEKECEKALKNVEEKESLEIIIKESLKFLMN.

It belongs to the RuvA family. Homotetramer. Forms an RuvA(8)-RuvB(12)-Holliday junction (HJ) complex. HJ DNA is sandwiched between 2 RuvA tetramers; dsDNA enters through RuvA and exits via RuvB. An RuvB hexamer assembles on each DNA strand where it exits the tetramer. Each RuvB hexamer is contacted by two RuvA subunits (via domain III) on 2 adjacent RuvB subunits; this complex drives branch migration. In the full resolvosome a probable DNA-RuvA(4)-RuvB(12)-RuvC(2) complex forms which resolves the HJ.

It is found in the cytoplasm. Functionally, the RuvA-RuvB-RuvC complex processes Holliday junction (HJ) DNA during genetic recombination and DNA repair, while the RuvA-RuvB complex plays an important role in the rescue of blocked DNA replication forks via replication fork reversal (RFR). RuvA specifically binds to HJ cruciform DNA, conferring on it an open structure. The RuvB hexamer acts as an ATP-dependent pump, pulling dsDNA into and through the RuvAB complex. HJ branch migration allows RuvC to scan DNA until it finds its consensus sequence, where it cleaves and resolves the cruciform DNA. This Hathewaya histolytica (Clostridium histolyticum) protein is Holliday junction branch migration complex subunit RuvA.